A 350-amino-acid chain; its full sequence is THUMP domain-containing protein 1 (350 aa).

Polar residues predominate over residues 1–10 (MATTAQQSPQ). Disordered regions lie at residues 1-42 (MATT…LEPG) and 75-96 (PEKF…DDAE). Residue Ala-2 is modified to N-acetylalanine. 4 positions are modified to phosphoserine: Ser-8, Ser-86, Ser-88, and Ser-119. The region spanning 147-254 (DMYKTKKKKT…KAVCCLSVVK (108 aa)) is the THUMP domain. Ser-270 bears the Phosphoserine mark. The segment covering 270 to 292 (SAKDSQPHPKLGNGKEAKLEPDS) has biased composition (basic and acidic residues). Positions 270–350 (SAKDSQPHPK…VPKTNENELS (81 aa)) are disordered.

This sequence belongs to the THUMPD1 family. As to quaternary structure, interacts with NAT10. Binds tRNA.

Functionally, functions as a tRNA-binding adapter to mediate NAT10-dependent tRNA acetylation modifying cytidine to N4-acetylcytidine (ac4C). The sequence is that of THUMP domain-containing protein 1 (Thumpd1) from Mus musculus (Mouse).